A 97-amino-acid polypeptide reads, in one-letter code: Small ribosomal subunit protein bS6 (97 aa).

The protein belongs to the bacterial ribosomal protein bS6 family.

Functionally, binds together with bS18 to 16S ribosomal RNA. The protein is Small ribosomal subunit protein bS6 of Listeria innocua serovar 6a (strain ATCC BAA-680 / CLIP 11262).